The sequence spans 274 residues: Large ribosomal subunit protein uL2cz/uL2cy (274 aa).

2 disordered regions span residues M1–G33 and M223–D265.

It belongs to the universal ribosomal protein uL2 family. Part of the 50S ribosomal subunit.

The protein resides in the plastid. The protein localises to the chloroplast. The sequence is that of Large ribosomal subunit protein uL2cz/uL2cy (rpl2-A) from Pelargonium hortorum (Common geranium).